The following is a 378-amino-acid chain: Putative monoglyceride lipase (378 aa).

The short motif at 97-101 is the GXSXG element; sequence GHSMG. The Nucleophile role is filled by serine 99. Active-site charge relay system residues include aspartate 219 and histidine 249. Residues 276–292 show a composition bias toward basic and acidic residues; it reads PSETVKSEQETAVEHPK. Residues 276–350 form a disordered region; it reads PSETVKSEQE…TSESTTVPET (75 aa). Low complexity predominate over residues 293 to 305; sequence PTATTSAPSASPT. At serine 301 the chain carries Phosphoserine. Over residues 341-350 the composition is skewed to polar residues; it reads TSESTTVPET.

It belongs to the AB hydrolase superfamily. Monoacylglycerol lipase family.

It is found in the lipid droplet. The protein localises to the cytoplasm. It localises to the endoplasmic reticulum. The protein resides in the mitochondrion outer membrane. The enzyme catalyses Hydrolyzes glycerol monoesters of long-chain fatty acids.. It participates in glycerolipid metabolism; triacylglycerol degradation. Functionally, converts monoacylglycerides (MAG) to free fatty acids and glycerol. Has a strong preference for monounsaturated monoglycerides. Required for efficient degradation of MAG, short-lived intermediates of glycerolipid metabolism which may also function as lipid signaling molecules. Controls inactivation of the signaling lipid N-palmitoylethanolamine (PEA). Involved in fatty acid ethyl ester (FAEE) catabolism. FAEEs are non-oxidative metabolites of ethanol that are transiently incorporated into lipid droplets (LDs). Their mobilization by LD-resident FAEE hydrolases facilitates a controlled metabolism of these potentially toxic lipid metabolites. In Schizosaccharomyces pombe (strain 972 / ATCC 24843) (Fission yeast), this protein is Putative monoglyceride lipase (mgl1).